A 131-amino-acid chain; its full sequence is Profilin-A (131 aa).

The protein belongs to the profilin family. In terms of assembly, occurs in many kinds of cells as a complex with monomeric actin in a 1:1 ratio.

It localises to the cytoplasm. The protein resides in the cytoskeleton. In terms of biological role, binds to actin and affects the structure of the cytoskeleton. At high concentrations, profilin prevents the polymerization of actin, whereas it enhances it at low concentrations. By binding to PIP2, it inhibits the formation of IP3 and DG. May serve as a modulator in pollen germination and pollen tube growth. This is Profilin-A from Oryza sativa subsp. japonica (Rice).